Here is a 460-residue protein sequence, read N- to C-terminus: Jacalin-related lectin 36 (460 aa).

One can recognise a Jacalin-type lectin 1 domain in the interval 1–131; the sequence is MAAATMSWDD…LNSIDVHFAP (131 aa). Position 2 is an N-acetylalanine (Ala-2). Disordered regions lie at residues 34–57, 133–162, and 291–334; these read YDGD…VSLS, PSSS…WDDG, and SGRG…PHEG. Over residues 133 to 143 the composition is skewed to low complexity; sequence PSSSSSSSSLS. One can recognise a Jacalin-type lectin 2 domain in the interval 145–289; that stretch reads ANKVDAQGGK…LNALGAYFAP (145 aa). A compositionally biased stretch (polar residues) spans 292-309; that stretch reads GRGTPSATQPPGSAQPTG. One can recognise a Jacalin-type lectin 3 domain in the interval 313 to 457; that stretch reads AKKLEAKGGN…IHQVGVHVKP (145 aa).

Belongs to the jacalin lectin family.

This is Jacalin-related lectin 36 (JAL36) from Arabidopsis thaliana (Mouse-ear cress).